The primary structure comprises 211 residues: Phosphoglycerate mutase (211 aa).

Substrate is bound by residues 14–21 (RHGESEWN) and 27–28 (TG). The Tele-phosphohistidine intermediate role is filled by H15. Phosphothreonine is present on T37. A Phosphoserine modification is found at S62. Residues R66, 93-96 (ERYY), K104, 120-121 (RR), and 164-165 (GN) each bind substrate. E93 serves as the catalytic Proton donor/acceptor. Y96 bears the Phosphotyrosine mark. Position 166 is a phosphoserine (S166).

Belongs to the phosphoglycerate mutase family. BPG-dependent PGAM subfamily. In terms of assembly, monomer. The N-terminus is blocked.

It catalyses the reaction (2R)-2-phosphoglycerate = (2R)-3-phosphoglycerate. Its pathway is carbohydrate degradation; glycolysis; pyruvate from D-glyceraldehyde 3-phosphate: step 3/5. The sequence is that of Phosphoglycerate mutase (gpm1) from Schizosaccharomyces pombe (strain 972 / ATCC 24843) (Fission yeast).